The sequence spans 600 residues: Proline--tRNA ligase (600 aa).

Belongs to the class-II aminoacyl-tRNA synthetase family. ProS type 1 subfamily. In terms of assembly, homodimer.

Its subcellular location is the cytoplasm. It catalyses the reaction tRNA(Pro) + L-proline + ATP = L-prolyl-tRNA(Pro) + AMP + diphosphate. Catalyzes the attachment of proline to tRNA(Pro) in a two-step reaction: proline is first activated by ATP to form Pro-AMP and then transferred to the acceptor end of tRNA(Pro). As ProRS can inadvertently accommodate and process non-cognate amino acids such as alanine and cysteine, to avoid such errors it has two additional distinct editing activities against alanine. One activity is designated as 'pretransfer' editing and involves the tRNA(Pro)-independent hydrolysis of activated Ala-AMP. The other activity is designated 'posttransfer' editing and involves deacylation of mischarged Ala-tRNA(Pro). The misacylated Cys-tRNA(Pro) is not edited by ProRS. The polypeptide is Proline--tRNA ligase (Prochlorococcus marinus (strain MIT 9301)).